A 338-amino-acid polypeptide reads, in one-letter code: Glycerol-3-phosphate dehydrogenase [NAD(P)+] (338 aa).

Residues serine 18, tyrosine 19, histidine 39, and lysine 113 each coordinate NADPH. 3 residues coordinate sn-glycerol 3-phosphate: lysine 113, glycine 142, and threonine 144. NADPH is bound at residue alanine 146. Residues lysine 198, aspartate 251, serine 261, arginine 262, and asparagine 263 each contribute to the sn-glycerol 3-phosphate site. Residue lysine 198 is the Proton acceptor of the active site. An NADPH-binding site is contributed by arginine 262. NADPH contacts are provided by valine 286 and glutamate 288.

It belongs to the NAD-dependent glycerol-3-phosphate dehydrogenase family.

The protein resides in the cytoplasm. The enzyme catalyses sn-glycerol 3-phosphate + NAD(+) = dihydroxyacetone phosphate + NADH + H(+). It carries out the reaction sn-glycerol 3-phosphate + NADP(+) = dihydroxyacetone phosphate + NADPH + H(+). It participates in membrane lipid metabolism; glycerophospholipid metabolism. In terms of biological role, catalyzes the reduction of the glycolytic intermediate dihydroxyacetone phosphate (DHAP) to sn-glycerol 3-phosphate (G3P), the key precursor for phospholipid synthesis. In Photobacterium profundum (strain SS9), this protein is Glycerol-3-phosphate dehydrogenase [NAD(P)+].